The primary structure comprises 607 residues: uncharacterized protein (607 aa).

Residues 16–44 (CTVCRKRKLKCDGNKPCGRCIRLNTPKEC) constitute a DNA-binding region (zn(2)-C6 fungal-type).

The protein localises to the nucleus. This is an uncharacterized protein from Saccharomyces cerevisiae (strain ATCC 204508 / S288c) (Baker's yeast).